Reading from the N-terminus, the 130-residue chain is S-adenosylmethionine decarboxylase proenzyme (130 aa).

Serine 78 (schiff-base intermediate with substrate; via pyruvic acid) is an active-site residue. Pyruvic acid (Ser); by autocatalysis is present on serine 78. Histidine 83 serves as the catalytic Proton acceptor; for processing activity. Cysteine 98 acts as the Proton donor; for catalytic activity in catalysis.

Belongs to the prokaryotic AdoMetDC family. Type 1 subfamily. Heterotetramer of two alpha and two beta chains arranged as a dimer of alpha/beta heterodimers. The cofactor is pyruvate. In terms of processing, is synthesized initially as an inactive proenzyme. Formation of the active enzyme involves a self-maturation process in which the active site pyruvoyl group is generated from an internal serine residue via an autocatalytic post-translational modification. Two non-identical subunits are generated from the proenzyme in this reaction, and the pyruvate is formed at the N-terminus of the alpha chain, which is derived from the carboxyl end of the proenzyme. The post-translation cleavage follows an unusual pathway, termed non-hydrolytic serinolysis, in which the side chain hydroxyl group of the serine supplies its oxygen atom to form the C-terminus of the beta chain, while the remainder of the serine residue undergoes an oxidative deamination to produce ammonia and the pyruvoyl group blocking the N-terminus of the alpha chain.

It catalyses the reaction S-adenosyl-L-methionine + H(+) = S-adenosyl 3-(methylsulfanyl)propylamine + CO2. It functions in the pathway amine and polyamine biosynthesis; S-adenosylmethioninamine biosynthesis; S-adenosylmethioninamine from S-adenosyl-L-methionine: step 1/1. Catalyzes the decarboxylation of S-adenosylmethionine to S-adenosylmethioninamine (dcAdoMet), the propylamine donor required for the synthesis of the polyamines spermine and spermidine from the diamine putrescine. The sequence is that of S-adenosylmethionine decarboxylase proenzyme from Aeropyrum pernix (strain ATCC 700893 / DSM 11879 / JCM 9820 / NBRC 100138 / K1).